We begin with the raw amino-acid sequence, 285 residues long: Bifunctional protein FolD (285 aa).

NADP(+)-binding positions include glycine 166–serine 168 and isoleucine 232.

It belongs to the tetrahydrofolate dehydrogenase/cyclohydrolase family. In terms of assembly, homodimer.

The catalysed reaction is (6R)-5,10-methylene-5,6,7,8-tetrahydrofolate + NADP(+) = (6R)-5,10-methenyltetrahydrofolate + NADPH. The enzyme catalyses (6R)-5,10-methenyltetrahydrofolate + H2O = (6R)-10-formyltetrahydrofolate + H(+). The protein operates within one-carbon metabolism; tetrahydrofolate interconversion. Its function is as follows. Catalyzes the oxidation of 5,10-methylenetetrahydrofolate to 5,10-methenyltetrahydrofolate and then the hydrolysis of 5,10-methenyltetrahydrofolate to 10-formyltetrahydrofolate. The polypeptide is Bifunctional protein FolD (Baumannia cicadellinicola subsp. Homalodisca coagulata).